The chain runs to 445 residues: Phosphoglucosamine mutase (445 aa).

S101 acts as the Phosphoserine intermediate in catalysis. The Mg(2+) site is built by S101, D240, D242, and D244. Position 101 is a phosphoserine (S101).

The protein belongs to the phosphohexose mutase family. Requires Mg(2+) as cofactor. In terms of processing, activated by phosphorylation.

The enzyme catalyses alpha-D-glucosamine 1-phosphate = D-glucosamine 6-phosphate. Catalyzes the conversion of glucosamine-6-phosphate to glucosamine-1-phosphate. The protein is Phosphoglucosamine mutase of Pseudomonas fluorescens (strain SBW25).